A 211-amino-acid polypeptide reads, in one-letter code: DNA-directed RNA polymerases I, II, and III subunit RPABC1 (211 aa).

It belongs to the archaeal Rpo5/eukaryotic RPB5 RNA polymerase subunit family. In terms of assembly, component of the RNA polymerase I (Pol I), RNA polymerase II (Pol II) and RNA polymerase III (Pol III) complexes consisting of at least 13, 12 and 17 subunits, respectively. In RNA Pol II, this subunit is present in 2-fold molar excess over the other subunits.

Its subcellular location is the nucleus. Functionally, DNA-dependent RNA polymerase catalyzes the transcription of DNA into RNA using the four ribonucleoside triphosphates as substrates. Common component of RNA polymerases I, II and III which synthesize ribosomal RNA precursors, mRNA precursors and many functional non-coding RNAs, and small RNAs, such as 5S rRNA and tRNAs, respectively. Pol II is the central component of the basal RNA polymerase II transcription machinery. Pols are composed of mobile elements that move relative to each other. In Pol II, RPB5 is part of the lower jaw surrounding the central large cleft and thought to grab the incoming DNA template. Seems to be the major component in this process. The protein is DNA-directed RNA polymerases I, II, and III subunit RPABC1 of Caenorhabditis briggsae.